The chain runs to 330 residues: CRISPR-associated endonuclease Cas1 (330 aa).

The Mn(2+) site is built by glutamate 154, histidine 222, and glutamate 237.

The protein belongs to the CRISPR-associated endonuclease Cas1 family. Homodimer, forms a heterotetramer with a Cas2 homodimer. Requires Mg(2+) as cofactor. It depends on Mn(2+) as a cofactor.

Functionally, CRISPR (clustered regularly interspaced short palindromic repeat), is an adaptive immune system that provides protection against mobile genetic elements (viruses, transposable elements and conjugative plasmids). CRISPR clusters contain spacers, sequences complementary to antecedent mobile elements, and target invading nucleic acids. CRISPR clusters are transcribed and processed into CRISPR RNA (crRNA). Acts as a dsDNA endonuclease. Involved in the integration of spacer DNA into the CRISPR cassette. The sequence is that of CRISPR-associated endonuclease Cas1 from Clostridium perfringens (strain SM101 / Type A).